The sequence spans 173 residues: RNA polymerase sigma factor TcsR (173 aa).

Positions 122 to 169 (IKDLTQNEKNILRKIYLHGLRESEISRELNISRQAVNKTHLRALEKLK) are sigma-70 factor domain-4. Residues 143 to 162 (ESEISRELNISRQAVNKTHL) constitute a DNA-binding region (H-T-H motif).

Belongs to the sigma-70 factor family.

Sigma factors are initiation factors that promote the attachment of RNA polymerase to specific initiation sites and are then released. Transcriptional regulator specifically required to activate expression of the toxin gene locus, composed of tcsL and tcdE/utxA. In Paraclostridium sordellii (Clostridium sordellii), this protein is RNA polymerase sigma factor TcsR.